A 305-amino-acid polypeptide reads, in one-letter code: Superkiller complex protein 8 (305 aa).

7 WD repeats span residues alanine 14–glutamine 57, glycine 62–alanine 101, alanine 104–serine 143, threonine 146–glutamate 187, glycine 188–threonine 227, glycine 230–threonine 269, and aspartate 272–isoleucine 305.

The protein belongs to the SKI8 family. In terms of assembly, component of the PAF1 complex. Component of the SKI complex.

The protein resides in the nucleus. It localises to the cytoplasm. In terms of biological role, component of the PAF1 complex (PAF1C) which has multiple functions during transcription by RNA polymerase II and is implicated in regulation of development and maintenance of embryonic stem cell pluripotency. PAF1C associates with RNA polymerase II through interaction with POLR2A CTD non-phosphorylated and 'Ser-2'- and 'Ser-5'-phosphorylated forms and is involved in transcriptional elongation, acting both independently and synergistically with TCEA1 and in cooperation with the DSIF complex and HTATSF1. Also acts as a component of the SKI complex, a multiprotein complex that assists the RNA-degrading exosome during the mRNA decay and quality-control pathways. The SKI complex catalyzes mRNA extraction from 80S ribosomal complexes in the 3'-5' direction and channels mRNA to the cytosolic exosome for degradation. In Xenopus tropicalis (Western clawed frog), this protein is Superkiller complex protein 8 (skic8).